Here is a 671-residue protein sequence, read N- to C-terminus: ATP-dependent zinc metalloprotease FtsH (671 aa).

Topologically, residues 1–22 (MANPNNNNDNKQNNNNNFFNDN) are cytoplasmic. Residues 23 to 43 (PLLAFAIFSIVIILIFKSFVG) form a helical membrane-spanning segment. At 44-130 (EGESLGTMMN…ISYEGVVGNG (87 aa)) the chain is on the periplasmic side. Residues 131–151 (FFSELISMMLPILIFFAIWIF) form a helical membrane-spanning segment. Over 152–671 (LAKKMSKGMG…SEESDNNKEA (520 aa)) the chain is Cytoplasmic. Position 224–231 (224–231 (GPPGTGKT)) interacts with ATP. Histidine 447 provides a ligand contact to Zn(2+). Residue glutamate 448 is part of the active site. The Zn(2+) site is built by histidine 451 and aspartate 525. Residues 630-671 (EKGMPSRLAHKDKVAKNKAEADKKEEALKKEISEESDNNKEA) form a disordered region.

In the central section; belongs to the AAA ATPase family. The protein in the C-terminal section; belongs to the peptidase M41 family. Homohexamer. Zn(2+) serves as cofactor.

It localises to the cell inner membrane. Acts as a processive, ATP-dependent zinc metallopeptidase for both cytoplasmic and membrane proteins. Plays a role in the quality control of integral membrane proteins. The sequence is that of ATP-dependent zinc metalloprotease FtsH from Sulfurovum sp. (strain NBC37-1).